Consider the following 126-residue polypeptide: Protein FMP49, mitochondrial (126 aa).

It is found in the mitochondrion. This chain is Protein FMP49, mitochondrial, found in Saccharomyces cerevisiae (strain ATCC 204508 / S288c) (Baker's yeast).